Here is an 85-residue protein sequence, read N- to C-terminus: Beta-insect depressant toxin LqhIT2 (85 aa).

The N-terminal stretch at 1-21 is a signal peptide; it reads MKLLLLLIVSASMLIESLVNA. The 61-residue stretch at 22–82 folds into the LCN-type CS-alpha/beta domain; it reads DGYIKRRDGC…TWKSETNTCG (61 aa). 4 cysteine pairs are disulfide-bonded: Cys-31–Cys-81, Cys-35–Cys-56, Cys-42–Cys-63, and Cys-46–Cys-65. Position 82 is a glycine amide (Gly-82).

It belongs to the long (4 C-C) scorpion toxin superfamily. Sodium channel inhibitor family. Beta subfamily. As to expression, expressed by the venom gland.

The protein localises to the secreted. In terms of biological role, depressant insect beta-toxins cause a transient contraction paralysis followed by a slow flaccid paralysis. They bind voltage-independently at site-4 of sodium channels (Nav) and shift the voltage of activation toward more negative potentials thereby affecting sodium channel activation and promoting spontaneous and repetitive firing. This toxin is active only on insects. The chain is Beta-insect depressant toxin LqhIT2 from Leiurus hebraeus (Hebrew deathstalker scorpion).